The sequence spans 493 residues: MPPAIGGPVGYTPPDGGWGWAVLVGAFISIGFSYAFPKSITVFFKEIEVIFSATTSEVSWISSIMLAVMYAGGPISSILVNKYGSRPVMIAGGCLSGCGLIAASFCNTVQELYLCIGVIGGLGLAFNLNPALTMIGKYFYKKRPLANGLAMAGSPVFLSTLAPLNQAFFDIFDWRGSFLILGGLLLNCCVAGSLMRPIGPEQVKLEKLKSKESLQEAGKSDANTDLIGGSPKGEKLSVFQTINKFLDLSLFTHRGFLLYLSGNVVMFFGLFTPLVFLSSYGKSKDFSSEKSAFLLSILAFVDMVARPSMGLAANTKWIRPRIQYFFAASVVANGVCHLLAPLSTTYVGFCVYAGVFGFAFGWLSSVLFETLMDLIGPQRFSSAVGLVTIVECCPVLLGPPLLGRLNDMYGDYKYTYWACGVILIIAGIYLFIGMGINYRLLAKEQKAEEKQKREGKEDEASTDVDEKPKETMKAAQSPQQHSSGDPTEEESPV.

The Cytoplasmic segment spans residues 1 to 22 (MPPAIGGPVGYTPPDGGWGWAV). Residues 23–44 (LVGAFISIGFSYAFPKSITVFF) traverse the membrane as a helical segment. Lys38 contacts (S)-lactate. The Extracellular portion of the chain corresponds to 45-55 (KEIEVIFSATT). The chain crosses the membrane as a helical span at residues 56-80 (SEVSWISSIMLAVMYAGGPISSILV). Residues 81–84 (NKYG) lie on the Cytoplasmic side of the membrane. A helical membrane pass occupies residues 85-105 (SRPVMIAGGCLSGCGLIAASF). Residues 106 to 109 (CNTV) lie on the Extracellular side of the membrane. A helical transmembrane segment spans residues 110–132 (QELYLCIGVIGGLGLAFNLNPAL). The Cytoplasmic segment spans residues 133 to 146 (TMIGKYFYKKRPLA). Residues 147 to 169 (NGLAMAGSPVFLSTLAPLNQAFF) traverse the membrane as a helical segment. Residues 170 to 174 (DIFDW) lie on the Extracellular side of the membrane. A helical transmembrane segment spans residues 175–194 (RGSFLILGGLLLNCCVAGSL). Residues 195–254 (MRPIGPEQVKLEKLKSKESLQEAGKSDANTDLIGGSPKGEKLSVFQTINKFLDLSLFTHR) lie on the Cytoplasmic side of the membrane. Phosphoserine is present on residues Ser210, Ser213, and Ser220. Thr224 bears the Phosphothreonine mark. Ser230 carries the post-translational modification Phosphoserine. A helical membrane pass occupies residues 255-281 (GFLLYLSGNVVMFFGLFTPLVFLSSYG). Topologically, residues 282-288 (KSKDFSS) are extracellular. A helical transmembrane segment spans residues 289 to 310 (EKSAFLLSILAFVDMVARPSMG). Asp302 contacts H(+). Arg306 is a binding site for (S)-lactate. Over 311-321 (LAANTKWIRPR) the chain is Cytoplasmic. A helical membrane pass occupies residues 322-342 (IQYFFAASVVANGVCHLLAPL). The Extracellular portion of the chain corresponds to 343–346 (STTY). A helical membrane pass occupies residues 347 to 368 (VGFCVYAGVFGFAFGWLSSVLF). Topologically, residues 369–382 (ETLMDLIGPQRFSS) are cytoplasmic. Residues 383–403 (AVGLVTIVECCPVLLGPPLLG) form a helical membrane-spanning segment. The Extracellular segment spans residues 404–414 (RLNDMYGDYKY). Residues 415–436 (TYWACGVILIIAGIYLFIGMGI) form a helical membrane-spanning segment. Topologically, residues 437–493 (NYRLLAKEQKAEEKQKREGKEDEASTDVDEKPKETMKAAQSPQQHSSGDPTEEESPV) are cytoplasmic. Basic and acidic residues predominate over residues 447-472 (AEEKQKREGKEDEASTDVDEKPKETM). A disordered region spans residues 447 to 493 (AEEKQKREGKEDEASTDVDEKPKETMKAAQSPQQHSSGDPTEEESPV). Residue Ser461 is modified to Phosphoserine. Residue Thr462 is modified to Phosphothreonine. Polar residues predominate over residues 474 to 485 (AAQSPQQHSSGD). Residues Ser477, Ser482, Ser483, and Ser491 each carry the phosphoserine modification.

Belongs to the major facilitator superfamily. Monocarboxylate porter (TC 2.A.1.13) family. Interacts with isoform 2 of BSG; interaction mediates SLC16A1 targeting to the plasma membrane. Interacts with EMB; interaction mediates SLC16A1 targeting to the plasma membrane. In terms of tissue distribution, detected in liver, brain, spinal cord, spermatozoa, muscle, white adipose tissue and brown adipose tissue (at protein level). Widely expressed, except in pancreas, where expression is not detectable.

Its subcellular location is the cell membrane. The protein localises to the basolateral cell membrane. It localises to the apical cell membrane. The enzyme catalyses (S)-lactate(in) + H(+)(in) = (S)-lactate(out) + H(+)(out). It carries out the reaction acetate(out) + H(+)(out) = acetate(in) + H(+)(in). It catalyses the reaction acetoacetate(out) + H(+)(out) = acetoacetate(in) + H(+)(in). The catalysed reaction is pyruvate(out) + H(+)(out) = pyruvate(in) + H(+)(in). The enzyme catalyses (R)-3-hydroxybutanoate(out) + H(+)(out) = (R)-3-hydroxybutanoate(in) + H(+)(in). It carries out the reaction 3-methyl-2-oxobutanoate(out) + H(+)(out) = 3-methyl-2-oxobutanoate(in) + H(+)(in). It catalyses the reaction 4-methyl-2-oxopentanoate(out) + H(+)(out) = 4-methyl-2-oxopentanoate(in) + H(+)(in). The catalysed reaction is succinate(in) + 2 H(+)(in) = succinate(out) + 2 H(+)(out). Its function is as follows. Bidirectional proton-coupled monocarboxylate transporter. Catalyzes the rapid transport across the plasma membrane of many monocarboxylates such as lactate, pyruvate, acetate and the ketone bodies acetoacetate and beta-hydroxybutyrate, and thus contributes to the maintenance of intracellular pH. The transport direction is determined by the proton motive force and the concentration gradient of the substrate monocarboxylate. MCT1 is a major lactate exporter. Plays a role in cellular responses to a high-fat diet by modulating the cellular levels of lactate and pyruvate that contribute to the regulation of central metabolic pathways and insulin secretion, with concomitant effects on plasma insulin levels and blood glucose homeostasis. Facilitates the protonated monocarboxylate form of succinate export, that its transient protonation upon muscle cell acidification in exercising muscle and ischemic heart. Functions via alternate outward- and inward-open conformation states. Protonation and deprotonation of 302-Asp is essential for the conformational transition. In Mus musculus (Mouse), this protein is Monocarboxylate transporter 1 (Slc16a1).